Here is a 349-residue protein sequence, read N- to C-terminus: Glycosyltransferase 8 domain-containing protein 2 (349 aa).

Over 1–6 (MALLRK) the chain is Cytoplasmic. A helical; Signal-anchor for type II membrane protein membrane pass occupies residues 7–24 (INQVLLFLLIVTLCVILY). Over 25 to 349 (KKVHKGTVPK…AGIFKLNHHS (325 aa)) the chain is Lumenal. N-linked (GlcNAc...) asparagine glycosylation occurs at N234.

Belongs to the glycosyltransferase 8 family.

The protein localises to the membrane. This Homo sapiens (Human) protein is Glycosyltransferase 8 domain-containing protein 2 (GLT8D2).